A 433-amino-acid polypeptide reads, in one-letter code: Xylose isomerase (433 aa).

Active-site residues include His-99 and Asp-102. Mg(2+) contacts are provided by Glu-230, Glu-266, His-269, Asp-294, Asp-305, Asp-307, and Asp-337.

It belongs to the xylose isomerase family. Homotetramer. The cofactor is Mg(2+).

The protein localises to the cytoplasm. The catalysed reaction is alpha-D-xylose = alpha-D-xylulofuranose. The sequence is that of Xylose isomerase from Cereibacter sphaeroides (strain ATCC 17029 / ATH 2.4.9) (Rhodobacter sphaeroides).